A 392-amino-acid polypeptide reads, in one-letter code: Selenide, water dikinase 1 (392 aa).

The active site involves Cys31. ATP-binding positions include Lys32, 67–69 (GMD), Asp87, Asp110, and 161–164 (GGQT). Asp69 serves as a coordination point for Mg(2+). Position 110 (Asp110) interacts with Mg(2+). Asp265 contacts Mg(2+).

This sequence belongs to the selenophosphate synthase 1 family. Class II subfamily. In terms of assembly, homodimer. Mg(2+) serves as cofactor.

The protein localises to the cell membrane. The protein resides in the nucleus membrane. The catalysed reaction is hydrogenselenide + ATP + H2O = selenophosphate + AMP + phosphate + 2 H(+). Functionally, synthesizes selenophosphate from selenide and ATP. The sequence is that of Selenide, water dikinase 1 (sephs1) from Xenopus tropicalis (Western clawed frog).